Consider the following 436-residue polypeptide: Hydrogenobyrinate a,c-diamide synthase (436 aa).

The GATase cobBQ-type domain maps to 244 to 435 (RIAVARDDAF…MHVIDFSGEA (192 aa)). Cysteine 327 serves as the catalytic Nucleophile.

The protein belongs to the CobB/CbiA family. Mg(2+) is required as a cofactor.

The enzyme catalyses hydrogenobyrinate + 2 L-glutamine + 2 ATP + 2 H2O = hydrogenobyrinate a,c-diamide + 2 L-glutamate + 2 ADP + 2 phosphate + 2 H(+). It functions in the pathway cofactor biosynthesis; adenosylcobalamin biosynthesis; cob(II)yrinate a,c-diamide from precorrin-2 (aerobic route): step 9/10. Catalyzes the ATP-dependent amidation of the two carboxylate groups at positions a and c of hydrogenobyrinate, using either L-glutamine or ammonia as the nitrogen source. The sequence is that of Hydrogenobyrinate a,c-diamide synthase from Brucella suis biovar 1 (strain 1330).